The sequence spans 510 residues: Hydroperoxide bicyclase CYP5164A3, mitochondrial (510 aa).

The N-terminal 31 residues, 1–31 (MQRVGAASPTCSSLQAPAAAPPILTISPHHR), are a transit peptide targeting the mitochondrion. Cysteine 452 is a heme binding site.

It belongs to the cytochrome P450 family. It depends on heme as a cofactor.

It localises to the mitochondrion. The catalysed reaction is (13S)-hydroperoxy-(9Z,11E,15Z)-octadecatrienoate = plasmodiophorol A. The enzyme catalyses (13S)-hydroperoxy-(9Z,11E,15Z)-octadecatrienoate = plasmodiophorol B. It carries out the reaction (13S)-hydroperoxy-(9Z,11E,15Z)-octadecatrienoate = ectocarpin A + H2O. It catalyses the reaction (15S)-hydroperoxy-(5Z,8Z,11Z,13E,17Z)-eicosapentaenoate = ectocarpin B + H2O. The catalysed reaction is (15S)-hydroperoxy-(5Z,8Z,11Z,13E,17Z)-eicosapentaenoate = ectocarpin C. The enzyme catalyses (15S)-hydroperoxy-(5Z,8Z,11Z,13E,17Z)-eicosapentaenoate + H2O = ectocarpin D. It carries out the reaction (15S)-hydroperoxy-(5Z,8Z,11Z,13E,17Z)-eicosapentaenoate = 14-oxo-15-hydroxy-(5Z,8Z,11Z,17Z)-eicosatetraenoate. It functions in the pathway lipid metabolism; oxylipin biosynthesis. Cytochrome P450 hydroperoxide bicyclase involved in the metabolism of oxylipins 'ectocarpins' natural products, such as hybridalactone, ecklonilactones and derivatives. Isomerizes the hydroperoxides into epoxyalcohols via epoxyallylic radical. Can use alpha-linolenic acid 13(S)-hydroperoxide (13-HPOTE) and eicosapentaenoic acid 15(S)-hydroperoxide (15-HPEPE) as preferred substrate to produce corresponding heterobicyclic oxylipins, such as plasmodiophorol A (6-oxabicyclo[3.1.0]hexane), plasmodiophorol B (2-oxabicyclo[2.2.1]heptane) and plasmodiophorol C (4-hydroxymethyl-1,2-dihydroxycyclopentane) as well as ectocarpin A (3-propenyl-6-oxabicyclo[3.1.0]hexane) formed at about 15:3:3:1 ratio for 13-HPOTE, and analogous to plasmodiophorols A and B including ectocarpin B (3-[(1'E)-propenyl]-6-oxabicyclo[3.1.0]hexane), ectocarpin C, 14-oxo-15-hydroxy-5,8,11,17-eicosate-traenoic acid and ectocarpin D for 15-HPEPE. Barely able to use linoleic acid 13-hydroperoxide (13-HPODE), linoleic acid 9-hydroperoxide (9-HPODE), eicosapentaenoic acid 15-hydroperoxide (15-HPEPE), and alpha-linolenic acid 9-hydroperoxide (9-HPOTE) as substrates. The chain is Hydroperoxide bicyclase CYP5164A3, mitochondrial from Ectocarpus siliculosus (Brown alga).